Here is a 935-residue protein sequence, read N- to C-terminus: C-1-tetrahydrofolate synthase, cytoplasmic (935 aa).

The residue at position 1 (M1) is an N-acetylmethionine. Positions 2–291 (APAEILNGRE…MLMQSTVESA (290 aa)) are methylenetetrahydrofolate dehydrogenase and methenyltetrahydrofolate cyclohydrolase (D/C) domain. Residues 52–56 (YINVK) and 99–101 (VQL) contribute to the substrate site. K56 is an active-site residue. NADP(+) contacts are provided by residues 172-174 (GRS) and S197. Residue 272–276 (PGGVG) participates in substrate binding. The interval 310-935 (LNLKTPDPSD…PETQQVNGLF (626 aa)) is formyltetrahydrofolate synthetase domain. At S318 the chain carries Phosphoserine. Position 380 to 387 (380 to 387 (TPLGEGKS)) interacts with ATP. Residues S413 and S490 each carry the phosphoserine modification.

It in the N-terminal section; belongs to the tetrahydrofolate dehydrogenase/cyclohydrolase family. This sequence in the C-terminal section; belongs to the formate--tetrahydrofolate ligase family. Homodimer.

The protein localises to the cytoplasm. The catalysed reaction is (6R)-5,10-methylene-5,6,7,8-tetrahydrofolate + NADP(+) = (6R)-5,10-methenyltetrahydrofolate + NADPH. The enzyme catalyses (6R)-5,10-methenyltetrahydrofolate + H2O = (6R)-10-formyltetrahydrofolate + H(+). It catalyses the reaction (6S)-5,6,7,8-tetrahydrofolate + formate + ATP = (6R)-10-formyltetrahydrofolate + ADP + phosphate. It functions in the pathway one-carbon metabolism; tetrahydrofolate interconversion. Its function is as follows. Trifunctional enzyme that catalyzes the interconversion of three forms of one-carbon-substituted tetrahydrofolate: (6R)-5,10-methylene-5,6,7,8-tetrahydrofolate, 5,10-methenyltetrahydrofolate and (6S)-10-formyltetrahydrofolate. These derivatives of tetrahydrofolate are differentially required in nucleotide and amino acid biosynthesis, (6S)-10-formyltetrahydrofolate being required for purine biosynthesis while (6R)-5,10-methylene-5,6,7,8-tetrahydrofolate is used for serine and methionine biosynthesis for instance. The sequence is that of C-1-tetrahydrofolate synthase, cytoplasmic (MTHFD1) from Pongo abelii (Sumatran orangutan).